The sequence spans 55 residues: Large ribosomal subunit protein bL33 (55 aa).

This sequence belongs to the bacterial ribosomal protein bL33 family.

This chain is Large ribosomal subunit protein bL33, found in Acidothermus cellulolyticus (strain ATCC 43068 / DSM 8971 / 11B).